The sequence spans 262 residues: Phosphonates import ATP-binding protein PhnC 3 (262 aa).

The region spanning 3–245 (IQLECLSVTY…ELNRIYGNAE (243 aa)) is the ABC transporter domain. 36-43 (GASGSGKS) is a binding site for ATP.

Belongs to the ABC transporter superfamily. Phosphonates importer (TC 3.A.1.9.1) family. In terms of assembly, the complex is composed of two ATP-binding proteins (PhnC), two transmembrane proteins (PhnE) and a solute-binding protein (PhnD).

It is found in the cell inner membrane. The enzyme catalyses phosphonate(out) + ATP + H2O = phosphonate(in) + ADP + phosphate + H(+). Part of the ABC transporter complex PhnCDE involved in phosphonates import. Responsible for energy coupling to the transport system. The polypeptide is Phosphonates import ATP-binding protein PhnC 3 (Nostoc sp. (strain PCC 7120 / SAG 25.82 / UTEX 2576)).